The primary structure comprises 149 residues: Large ribosomal subunit protein uL11 (149 aa).

Belongs to the universal ribosomal protein uL11 family. As to quaternary structure, part of the ribosomal stalk of the 50S ribosomal subunit. Interacts with L10 and the large rRNA to form the base of the stalk. L10 forms an elongated spine to which L12 dimers bind in a sequential fashion forming a multimeric L10(L12)X complex. In terms of processing, one or more lysine residues are methylated.

Its function is as follows. Forms part of the ribosomal stalk which helps the ribosome interact with GTP-bound translation factors. The polypeptide is Large ribosomal subunit protein uL11 (Xanthobacter autotrophicus (strain ATCC BAA-1158 / Py2)).